The following is a 124-amino-acid chain: Small ribosomal subunit protein uS12 (124 aa).

Residues 1–28 (MPTIQQLIRTERQSSKAKTKSPALKSCP) are disordered. Asp-89 bears the 3-methylthioaspartic acid mark. The segment at 104–124 (TAGVKDRRQSRSKYGAKTPKE) is disordered.

It belongs to the universal ribosomal protein uS12 family. Part of the 30S ribosomal subunit. Contacts proteins S8 and S17. May interact with IF1 in the 30S initiation complex.

In terms of biological role, with S4 and S5 plays an important role in translational accuracy. Interacts with and stabilizes bases of the 16S rRNA that are involved in tRNA selection in the A site and with the mRNA backbone. Located at the interface of the 30S and 50S subunits, it traverses the body of the 30S subunit contacting proteins on the other side and probably holding the rRNA structure together. The combined cluster of proteins S8, S12 and S17 appears to hold together the shoulder and platform of the 30S subunit. The polypeptide is Small ribosomal subunit protein uS12 (Synechococcus sp. (strain WH7803)).